A 336-amino-acid chain; its full sequence is MYYPFVRKALFQLDPERAHEFTFQQLRRVTGTPLEALVRQKVPAKPVSCMGLTFKNPLGLAAGLDKDGECIDALGAMGFGSIEIGTVTPRPQPGNDKPRLFRLVDAEGLINRMGFNNLGVDNLVENVKKAHFDGILGINIGKNKDTPVENGKDDYLICMEKIYAYAGYIAINISSPNTPGLRTLQYGEALDDLLTAIKNKQNDLQTIHHKYVPIAVKIAPDLSEDELIQVADSLVRHNIDGVIATNTTLDRSLVQGMKNCDETGGLSGRPLQLKSTEIIRRLSQELKEQLPIIGVGGIDSVIAAREKMAAGATLVQIYSGFIFKGPQLIKEIVTHI.

Residues alanine 62–lysine 66 and threonine 86 contribute to the FMN site. Lysine 66 is a substrate binding site. Position 111–115 (asparagine 111–phenylalanine 115) interacts with substrate. FMN contacts are provided by asparagine 139 and asparagine 172. A substrate-binding site is contributed by asparagine 172. The Nucleophile role is filled by serine 175. Asparagine 177 provides a ligand contact to substrate. Residues lysine 217 and threonine 245 each coordinate FMN. Asparagine 246–threonine 247 is a substrate binding site. FMN-binding positions include glycine 268, glycine 297, and tyrosine 318–serine 319.

The protein belongs to the dihydroorotate dehydrogenase family. Type 2 subfamily. Monomer. FMN serves as cofactor.

It is found in the cell membrane. It catalyses the reaction (S)-dihydroorotate + a quinone = orotate + a quinol. The protein operates within pyrimidine metabolism; UMP biosynthesis via de novo pathway; orotate from (S)-dihydroorotate (quinone route): step 1/1. Catalyzes the conversion of dihydroorotate to orotate with quinone as electron acceptor. This is Dihydroorotate dehydrogenase (quinone) from Citrobacter koseri (strain ATCC BAA-895 / CDC 4225-83 / SGSC4696).